Reading from the N-terminus, the 629-residue chain is Polygalacturonase non-catalytic subunit AroGP2 (629 aa).

An N-terminal signal peptide occupies residues 1-27 (MHNKILVSSYILLVLLFSLSSFNIVVA). Positions 28–109 (KDGDESGNPF…MCAPDLLPSL (82 aa)) are excised as a propeptide. N-linked (GlcNAc...) asparagine glycans are attached at residues N125, N143, N255, N277, N333, N368, and N386. Residues 267–293 (YGQNANGENQNFTSYSTNGNNPQNNFK) are compositionally biased toward polar residues. A disordered region spans residues 267–305 (YGQNANGENQNFTSYSTNGNNPQNNFKNYGVGGNGPSET). The 215-residue stretch at 414–628 (FFREKMLKSG…FENDMTWATA (215 aa)) folds into the BURP domain.

In terms of assembly, interacts with polygalacturonase to form heterodimers.

It is found in the secreted. The protein resides in the extracellular space. Its subcellular location is the apoplast. The protein localises to the cell wall. Non-catalytic subunit of polygalacturonase. The sequence is that of Polygalacturonase non-catalytic subunit AroGP2 (GP2) from Solanum lycopersicum (Tomato).